Here is a 250-residue protein sequence, read N- to C-terminus: Adenosine 5'-phosphosulfate reductase (250 aa).

Positions 119, 120, 202, and 205 each coordinate [4Fe-4S] cluster. Cys-230 functions as the Nucleophile; cysteine thiosulfonate intermediate in the catalytic mechanism.

This sequence belongs to the PAPS reductase family. CysH subfamily. It depends on [4Fe-4S] cluster as a cofactor.

Its subcellular location is the cytoplasm. It carries out the reaction [thioredoxin]-disulfide + sulfite + AMP + 2 H(+) = adenosine 5'-phosphosulfate + [thioredoxin]-dithiol. It functions in the pathway sulfur metabolism; hydrogen sulfide biosynthesis; sulfite from sulfate. Functionally, catalyzes the formation of sulfite from adenosine 5'-phosphosulfate (APS) using thioredoxin as an electron donor. The polypeptide is Adenosine 5'-phosphosulfate reductase (Burkholderia cepacia (Pseudomonas cepacia)).